Consider the following 426-residue polypeptide: MGLSYGIFICFLLLGGMELCCPQTIWPTETYYPLTSRPPVMVDCLESQLVVTVSKDLFGTGKLIRPADLTLGPENCEPLVSMDTDDVVRFEVGLHECGSRVQVTDNALVYSTFLIHSPRPAGNLSILRTNRAEVPIECHYPRHSNVSSQAILPTWVPFRTTMLFEEKLVFSLRLMEEDWGSEKQSPTFQLGDIAHLQAEVHTGSHMPLRLFVDHCVATLTPDRNAFLHHKIVDFHGCLVDGLYNSSSAFKAPRPRPETLQFTVDVFHFAKDSRNTIYITCHLKVTPADRVPDQLNKACSFIKSTKRWYPVEGSADICRCCNKGSCGLPGRSRRLSHLERGWRKSVSHTRNRRHVTEEAEITVGPLIFLGKASDHGIEGSTSPHTSVMLGLGLATVVSLTLATIVLVLAKRHRTASHPVICPASVSQ.

An N-terminal signal peptide occupies residues 1 to 22; that stretch reads MGLSYGIFICFLLLGGMELCCP. Gln-23 is modified (pyrrolidone carboxylic acid). Residues 23–385 lie on the Extracellular side of the membrane; the sequence is QTIWPTETYY…IEGSTSPHTS (363 aa). The ZP domain occupies 43 to 305; that stretch reads DCLESQLVVT…KACSFIKSTK (263 aa). 2 disulfides stabilise this stretch: Cys-44/Cys-138 and Cys-76/Cys-97. 2 N-linked (GlcNAc...) asparagine glycosylation sites follow: Asn-123 and Asn-145. O-linked (GalNAc...) threonine glycans are attached at residues Thr-154, Thr-160, and Thr-161. Disulfide bonds link Cys-215-Cys-280 and Cys-237-Cys-298. Residue Asn-244 is glycosylated (N-linked (GlcNAc...) asparagine). Positions 351–426 are cleaved as a propeptide — removed in mature form; sequence RRHVTEEAEI…PVICPASVSQ (76 aa). A helical membrane pass occupies residues 386–406; sequence VMLGLGLATVVSLTLATIVLV. The Cytoplasmic segment spans residues 407–426; that stretch reads LAKRHRTASHPVICPASVSQ.

It belongs to the ZP domain family. ZPC subfamily. In terms of assembly, polymers of ZP2 and ZP3 organized into long filaments cross-linked by ZP1 homodimers. Interacts with ZP1 and ZP2. In terms of processing, proteolytically cleaved before the transmembrane segment to yield the secreted ectodomain incorporated in the zona pellucida. N-glycosylated. Post-translationally, O-glycosylated; removal of O-linked glycans may play an important role in the post-fertilization block to polyspermy. As to expression, expressed in oocytes.

The protein localises to the zona pellucida. It is found in the cell membrane. Functionally, component of the zona pellucida, an extracellular matrix surrounding oocytes which mediates sperm binding, induction of the acrosome reaction and prevents post-fertilization polyspermy. The zona pellucida is composed of 3 to 4 glycoproteins, ZP1, ZP2, ZP3, and ZP4. ZP3 is essential for sperm binding and zona matrix formation. The polypeptide is Zona pellucida sperm-binding protein 3 (ZP3) (Canis lupus familiaris (Dog)).